The chain runs to 183 residues: Capsid protein (183 aa).

Residues 136 to 183 are disordered; it reads NAPILSTLPETTVVRRRGRSPRRRTPSPRRRRSQSPRRRRSQSRESQC. The span at 149 to 176 shows a compositional bias: basic residues; that stretch reads VRRRGRSPRRRTPSPRRRRSQSPRRRRS. Phosphoserine; by host occurs at positions 155, 162, and 170. The stretch at 155 to 161 is one 1; half-length repeat; that stretch reads SPRRRTP. Positions 155-177 are 3 X 8 AA repeats of S-P-R-R-R-[PR]-S-Q; the sequence is SPRRRTPSPRRRRSQSPRRRRSQ. Residues 158–175 carry the Bipartite nuclear localization signal motif; that stretch reads RRTPSPRRRRSQSPRRRR. Tandem repeats lie at residues 162-169 and 170-177. The tract at residues 177–183 is RNA binding; that stretch reads QSRESQC.

The protein belongs to the orthohepadnavirus core antigen family. Homodimerizes, then multimerizes. Interacts with cytosol exposed regions of viral L glycoprotein present in the reticulum-to-Golgi compartment. Interacts with human FLNB. Phosphorylated form interacts with host importin alpha; this interaction depends on the exposure of the NLS, which itself depends upon genome maturation and/or phosphorylation of the capsid protein. Interacts with host NUP153. Post-translationally, phosphorylated by host SRPK1, SRPK2, and maybe protein kinase C or GAPDH. Phosphorylation is critical for pregenomic RNA packaging. Protein kinase C phosphorylation is stimulated by HBx protein and may play a role in transport of the viral genome to the nucleus at the late step during the viral replication cycle.

It is found in the virion. The protein localises to the host cytoplasm. Functionally, self assembles to form an icosahedral capsid. Most capsids appear to be large particles with an icosahedral symmetry of T=4 and consist of 240 copies of capsid protein, though a fraction forms smaller T=3 particles consisting of 180 capsid proteins. Entering capsids are transported along microtubules to the nucleus. Phosphorylation of the capsid is thought to induce exposure of nuclear localization signal in the C-terminal portion of the capsid protein that allows binding to the nuclear pore complex via the importin (karyopherin-) alpha and beta. Capsids are imported in intact form through the nuclear pore into the nuclear basket, where it probably binds NUP153. Only capsids that contain the mature viral genome can release the viral DNA and capsid protein into the nucleoplasm. Immature capsids get stuck in the basket. Capsids encapsulate the pre-genomic RNA and the P protein. Pre-genomic RNA is reverse-transcribed into DNA while the capsid is still in the cytoplasm. The capsid can then either be directed to the nucleus, providing more genomes for transcription, or bud through the endoplasmic reticulum to provide new virions. The sequence is that of Capsid protein from Hepatitis B virus genotype B1 subtype adw (isolate Japan/pJDW233/1988) (HBV-B).